A 246-amino-acid chain; its full sequence is Small ribosomal subunit protein uS3 (246 aa).

The KH type-2 domain maps to 38-106 (IRQYLNARLA…DVQINIYEIR (69 aa)). Positions 218 to 246 (VAKNQSRRPNAQGGNNRGGDRNRRRKGNR) are disordered.

This sequence belongs to the universal ribosomal protein uS3 family. As to quaternary structure, part of the 30S ribosomal subunit. Forms a tight complex with proteins S10 and S14.

Functionally, binds the lower part of the 30S subunit head. Binds mRNA in the 70S ribosome, positioning it for translation. The polypeptide is Small ribosomal subunit protein uS3 (Porphyromonas gingivalis (strain ATCC 33277 / DSM 20709 / CIP 103683 / JCM 12257 / NCTC 11834 / 2561)).